Reading from the N-terminus, the 162-residue chain is Putative 4-hydroxy-4-methyl-2-oxoglutarate aldolase (162 aa).

Substrate-binding positions include 75-78 and Arg-97; that span reads GDML. An a divalent metal cation-binding site is contributed by Asp-98.

It belongs to the class II aldolase/RraA-like family. As to quaternary structure, homotrimer. The cofactor is a divalent metal cation.

It carries out the reaction 4-hydroxy-4-methyl-2-oxoglutarate = 2 pyruvate. It catalyses the reaction oxaloacetate + H(+) = pyruvate + CO2. Its function is as follows. Catalyzes the aldol cleavage of 4-hydroxy-4-methyl-2-oxoglutarate (HMG) into 2 molecules of pyruvate. Also contains a secondary oxaloacetate (OAA) decarboxylase activity due to the common pyruvate enolate transition state formed following C-C bond cleavage in the retro-aldol and decarboxylation reactions. The polypeptide is Putative 4-hydroxy-4-methyl-2-oxoglutarate aldolase (Pseudomonas paraeruginosa (strain DSM 24068 / PA7) (Pseudomonas aeruginosa (strain PA7))).